The following is a 341-amino-acid chain: S-adenosylmethionine:tRNA ribosyltransferase-isomerase (341 aa).

This sequence belongs to the QueA family. In terms of assembly, monomer.

It is found in the cytoplasm. The catalysed reaction is 7-aminomethyl-7-carbaguanosine(34) in tRNA + S-adenosyl-L-methionine = epoxyqueuosine(34) in tRNA + adenine + L-methionine + 2 H(+). The protein operates within tRNA modification; tRNA-queuosine biosynthesis. Its function is as follows. Transfers and isomerizes the ribose moiety from AdoMet to the 7-aminomethyl group of 7-deazaguanine (preQ1-tRNA) to give epoxyqueuosine (oQ-tRNA). In Clostridium botulinum (strain Loch Maree / Type A3), this protein is S-adenosylmethionine:tRNA ribosyltransferase-isomerase.